The chain runs to 190 residues: DNA-binding transcriptional repressor TetR (190 aa).

Residues 6–66 form the HTH tetR-type domain; that stretch reads ETRSAALLAV…AALDAHDASF (61 aa). A DNA-binding region (H-T-H motif) is located at residues 29-48; that stretch reads SMDSVAALAHASKTTIYRRW.

Homodimer.

Functionally, binds to its own palindromic promoter and represses transcription of its operon; addition of tetracycline or doxycycline (but not tigecycline) interferes with DNA binding. Addition of TetX to the DNA-TetR-antibiotic complex restores DNA binding. The protein is DNA-binding transcriptional repressor TetR of Mycobacteroides abscessus (strain ATCC 19977 / DSM 44196 / CCUG 20993 / CIP 104536 / JCM 13569 / NCTC 13031 / TMC 1543 / L948) (Mycobacterium abscessus).